The sequence spans 290 residues: 4-hydroxybenzoate octaprenyltransferase (290 aa).

8 helical membrane passes run 23–43, 46–66, 99–119, 141–161, 163–183, 212–232, 233–253, and 268–288; these read IGALLLLWPTLWALWVATPGM, LWILAVFVAGVWLMRAAGCVV, LFVVLVLLAFLLVLTLNAMTI, LPQVVLGAAFGWSIPMAFAAV, ESLPLSCWLMFLANILWAVAY, TLIIGILQLGVMALMALIGWL, NGLGWGYYWAVLVAGALFVYQ, and AFMNNNYVGLVLFLGLAMSYW.

This sequence belongs to the UbiA prenyltransferase family. Mg(2+) serves as cofactor.

It localises to the cell inner membrane. The enzyme catalyses all-trans-octaprenyl diphosphate + 4-hydroxybenzoate = 4-hydroxy-3-(all-trans-octaprenyl)benzoate + diphosphate. The protein operates within cofactor biosynthesis; ubiquinone biosynthesis. Functionally, catalyzes the prenylation of para-hydroxybenzoate (PHB) with an all-trans polyprenyl group. Mediates the second step in the final reaction sequence of ubiquinone-8 (UQ-8) biosynthesis, which is the condensation of the polyisoprenoid side chain with PHB, generating the first membrane-bound Q intermediate 3-octaprenyl-4-hydroxybenzoate. This Salmonella typhi protein is 4-hydroxybenzoate octaprenyltransferase.